A 1007-amino-acid chain; its full sequence is A disintegrin and metalloproteinase with thrombospondin motifs 1 (1007 aa).

A signal peptide spans 1-20 (MPCCLWAALSLLLAVVGAGA). Residues Asn130 and Asn228 are each glycosylated (N-linked (GlcNAc...) asparagine). The region spanning 184–370 (LWLELAIVAD…WSSCSKEQFH (187 aa)) is the Peptidase M12B domain. His322 contacts Zn(2+). The short motif at 322–333 (HELAHLLGLTHD) is the Metal-binding element. Residue Glu323 is part of the active site. Residues His326 and His332 each coordinate Zn(2+). Disulfide bonds link Cys338/Cys364, Cys494/Cys530, Cys498/Cys536, and Cys509/Cys520. One can recognise a TSP type-1 1 domain in the interval 482–537 (TPEWGDWEEWSACNADCGYGLRTRTRKCKYRGFVSESACEGAGSQVATCWAGSSCA). N-linked (GlcNAc...) asparagine glycosylation is found at Asn561, Asn610, Asn626, Asn737, Asn777, and Asn865. TSP type-1 domains are found at residues 833–899 (CEFV…NRIP) and 900–952 (CPVY…RRCP). Disulfide bonds link Cys912/Cys946, Cys916/Cys951, and Cys927/Cys935.

Zn(2+) serves as cofactor.

The protein localises to the secreted. It is found in the extracellular space. Its subcellular location is the extracellular matrix. Functionally, involved in larval molting and metamorphosis. May degrade extracellular matrix (ECM) and basement membrane (BM) during the development of organs to allow degeneration and remodeling of tissues. The polypeptide is A disintegrin and metalloproteinase with thrombospondin motifs 1 (Bombyx mori (Silk moth)).